A 332-amino-acid polypeptide reads, in one-letter code: Arabinogalactan endo-beta-1,4-galactanase (332 aa).

Residue N111 is glycosylated (N-linked (GlcNAc...) asparagine). E135 acts as the Proton donor in catalysis. E245 acts as the Nucleophile in catalysis.

Belongs to the glycosyl hydrolase 53 family.

The catalysed reaction is The enzyme specifically hydrolyzes (1-&gt;4)-beta-D-galactosidic linkages in type I arabinogalactans.. The protein is Arabinogalactan endo-beta-1,4-galactanase of Humicola insolens (Soft-rot fungus).